The chain runs to 379 residues: Dihydroflavonol 4-reductase (379 aa).

The NADP(+) site is built by Lys56 and Tyr175.

This sequence belongs to the NAD(P)-dependent epimerase/dehydratase family. Dihydroflavonol-4-reductase subfamily. Expressed in both leaf and hypocotyl tissues.

The catalysed reaction is a (2R,3S,4S)-leucoanthocyanidin + NADP(+) = a (2R,3R)-dihydroflavonol + NADPH + H(+). The enzyme catalyses (2S)-flavan-4-ol + NADP(+) = (2S)-flavanone + NADPH + H(+). It participates in pigment biosynthesis; anthocyanin biosynthesis. Functionally, bifunctional enzyme involved in flavonoid metabolism. The sequence is that of Dihydroflavonol 4-reductase from Solanum lycopersicum (Tomato).